Reading from the N-terminus, the 358-residue chain is Protein SRG1 (358 aa).

Residues 209 to 309 (SVQSMRMNYY…RLSIATFHNV (101 aa)) form the Fe2OG dioxygenase domain. Positions 233, 235, and 290 each coordinate Fe cation.

It belongs to the iron/ascorbate-dependent oxidoreductase family. Low expression in roots and leaves.

This is Protein SRG1 (SRG1) from Arabidopsis thaliana (Mouse-ear cress).